The primary structure comprises 475 residues: 3-isopropylmalate dehydratase large subunit (475 aa).

3 residues coordinate [4Fe-4S] cluster: C348, C408, and C411.

It belongs to the aconitase/IPM isomerase family. LeuC type 1 subfamily. Heterodimer of LeuC and LeuD. The cofactor is [4Fe-4S] cluster.

The enzyme catalyses (2R,3S)-3-isopropylmalate = (2S)-2-isopropylmalate. The protein operates within amino-acid biosynthesis; L-leucine biosynthesis; L-leucine from 3-methyl-2-oxobutanoate: step 2/4. Its function is as follows. Catalyzes the isomerization between 2-isopropylmalate and 3-isopropylmalate, via the formation of 2-isopropylmaleate. The sequence is that of 3-isopropylmalate dehydratase large subunit from Acidobacterium capsulatum (strain ATCC 51196 / DSM 11244 / BCRC 80197 / JCM 7670 / NBRC 15755 / NCIMB 13165 / 161).